Consider the following 177-residue polypeptide: Cytochrome c oxidase assembly protein CtaG (177 aa).

The Cytoplasmic portion of the chain corresponds to 1–8; the sequence is MTQKAKNT. The helical; Signal-anchor for type II membrane protein transmembrane segment at 9-29 threads the bilayer; the sequence is IYLLILIILSMLCLVYASVPL. Topologically, residues 30–177 are periplasmic; sequence YSIFCKVTGY…TFFKYKENTK (148 aa).

The protein belongs to the COX11/CtaG family.

It is found in the cell inner membrane. Exerts its effect at some terminal stage of cytochrome c oxidase synthesis, probably by being involved in the insertion of the copper B into subunit I. The sequence is that of Cytochrome c oxidase assembly protein CtaG from Ehrlichia ruminantium (strain Welgevonden).